Reading from the N-terminus, the 101-residue chain is Urease subunit beta (101 aa).

It belongs to the urease beta subunit family. Heterotrimer of UreA (gamma), UreB (beta) and UreC (alpha) subunits. Three heterotrimers associate to form the active enzyme.

It is found in the cytoplasm. It catalyses the reaction urea + 2 H2O + H(+) = hydrogencarbonate + 2 NH4(+). The protein operates within nitrogen metabolism; urea degradation; CO(2) and NH(3) from urea (urease route): step 1/1. This chain is Urease subunit beta, found in Burkholderia ambifaria (strain MC40-6).